A 133-amino-acid polypeptide reads, in one-letter code: S-adenosylmethionine decarboxylase proenzyme (133 aa).

Residue Ser-64 is the Schiff-base intermediate with substrate; via pyruvic acid of the active site. At Ser-64 the chain carries Pyruvic acid (Ser); by autocatalysis. The active-site Proton acceptor; for processing activity is His-69. The Proton donor; for catalytic activity role is filled by Cys-84.

The protein belongs to the prokaryotic AdoMetDC family. Type 1 subfamily. In terms of assembly, heterotetramer of two alpha and two beta chains arranged as a dimer of alpha/beta heterodimers. Requires pyruvate as cofactor. Post-translationally, is synthesized initially as an inactive proenzyme. Formation of the active enzyme involves a self-maturation process in which the active site pyruvoyl group is generated from an internal serine residue via an autocatalytic post-translational modification. Two non-identical subunits are generated from the proenzyme in this reaction, and the pyruvate is formed at the N-terminus of the alpha chain, which is derived from the carboxyl end of the proenzyme. The post-translation cleavage follows an unusual pathway, termed non-hydrolytic serinolysis, in which the side chain hydroxyl group of the serine supplies its oxygen atom to form the C-terminus of the beta chain, while the remainder of the serine residue undergoes an oxidative deamination to produce ammonia and the pyruvoyl group blocking the N-terminus of the alpha chain.

It catalyses the reaction S-adenosyl-L-methionine + H(+) = S-adenosyl 3-(methylsulfanyl)propylamine + CO2. It participates in amine and polyamine biosynthesis; S-adenosylmethioninamine biosynthesis; S-adenosylmethioninamine from S-adenosyl-L-methionine: step 1/1. Its function is as follows. Catalyzes the decarboxylation of S-adenosylmethionine to S-adenosylmethioninamine (dcAdoMet), the propylamine donor required for the synthesis of the polyamines spermine and spermidine from the diamine putrescine. This is S-adenosylmethionine decarboxylase proenzyme from Sulfurihydrogenibium sp. (strain YO3AOP1).